The primary structure comprises 119 residues: Phosphoribosyl-AMP cyclohydrolase (119 aa).

Asp-78 lines the Mg(2+) pocket. Cys-79 lines the Zn(2+) pocket. Mg(2+) is bound by residues Asp-80 and Asp-82. Residues Cys-95 and Cys-102 each contribute to the Zn(2+) site.

The protein belongs to the PRA-CH family. Homodimer. The cofactor is Mg(2+). Zn(2+) is required as a cofactor.

It localises to the cytoplasm. The enzyme catalyses 1-(5-phospho-beta-D-ribosyl)-5'-AMP + H2O = 1-(5-phospho-beta-D-ribosyl)-5-[(5-phospho-beta-D-ribosylamino)methylideneamino]imidazole-4-carboxamide. It participates in amino-acid biosynthesis; L-histidine biosynthesis; L-histidine from 5-phospho-alpha-D-ribose 1-diphosphate: step 3/9. Its function is as follows. Catalyzes the hydrolysis of the adenine ring of phosphoribosyl-AMP. The polypeptide is Phosphoribosyl-AMP cyclohydrolase (Jannaschia sp. (strain CCS1)).